The following is a 1047-amino-acid chain: Atrial natriuretic peptide receptor 2 (1047 aa).

A signal peptide spans methionine 1–glycine 16. Over valine 17–isoleucine 458 the chain is Extracellular. 2 N-linked (GlcNAc...) asparagine glycosylation sites follow: asparagine 24 and asparagine 35. Cysteine 75 and cysteine 101 are oxidised to a cystine. Asparagine 161, asparagine 195, asparagine 244, asparagine 277, and asparagine 349 each carry an N-linked (GlcNAc...) asparagine glycan. A helical transmembrane segment spans residues valine 459–phenylalanine 478. Over arginine 479–leucine 1047 the chain is Cytoplasmic. Residue serine 513 is modified to Phosphoserine. Residues serine 513–isoleucine 786 form the Protein kinase domain. At threonine 516 the chain carries Phosphothreonine. Phosphoserine occurs at positions 518, 522, 523, and 526. Threonine 529 carries the post-translational modification Phosphothreonine. Residues threonine 861–glutamate 991 form the Guanylate cyclase domain.

It belongs to the adenylyl cyclase class-4/guanylyl cyclase family. In terms of processing, phosphorylated. Phosphorylation of the protein kinase-like domain is required for full activation by CNP. Glycosylated. As to expression, widely expressed. Expressed in the columnar proliferating and prehypertrophic chondrocyte layers of the tibia.

It localises to the cell membrane. It carries out the reaction GTP = 3',5'-cyclic GMP + diphosphate. In terms of biological role, receptor for the C-type natriuretic peptide NPPC/CNP hormone. Has guanylate cyclase activity upon binding of its ligand. May play a role in the regulation of skeletal growth. This is Atrial natriuretic peptide receptor 2 (Npr2) from Mus musculus (Mouse).